The chain runs to 218 residues: Octanoyltransferase (218 aa).

A BPL/LPL catalytic domain is found at 31–206 (REAADEVWLV…QLVKHLDYAE (176 aa)). Substrate-binding positions include 70 to 77 (RGGQVTYH), 137 to 139 (SLG), and 150 to 152 (GLA). Cys168 serves as the catalytic Acyl-thioester intermediate.

This sequence belongs to the LipB family.

It localises to the cytoplasm. It catalyses the reaction octanoyl-[ACP] + L-lysyl-[protein] = N(6)-octanoyl-L-lysyl-[protein] + holo-[ACP] + H(+). Its pathway is protein modification; protein lipoylation via endogenous pathway; protein N(6)-(lipoyl)lysine from octanoyl-[acyl-carrier-protein]: step 1/2. Functionally, catalyzes the transfer of endogenously produced octanoic acid from octanoyl-acyl-carrier-protein onto the lipoyl domains of lipoate-dependent enzymes. Lipoyl-ACP can also act as a substrate although octanoyl-ACP is likely to be the physiological substrate. The sequence is that of Octanoyltransferase from Pseudomonas savastanoi pv. phaseolicola (strain 1448A / Race 6) (Pseudomonas syringae pv. phaseolicola (strain 1448A / Race 6)).